A 559-amino-acid chain; its full sequence is Poly(U)-binding-splicing factor PUF60 (559 aa).

The inhibits homodimerization stretch occupies residues 1–516 (MATATIALQV…EDAEIIVKIF (516 aa)). Residues Q14 and K43 each participate in a glycyl lysine isopeptide (Lys-Gly) (interchain with G-Cter in SUMO2) cross-link. Phosphothreonine is present on T60. The tract at residues 77-559 (QSIKSVLVKQ…ERFDNSDLSA (483 aa)) is inhibits transcriptional repression, interaction with ERCC3 and apoptosis induction. K80 participates in a covalent cross-link: Glycyl lysine isopeptide (Lys-Gly) (interchain with G-Cter in SUMO2). The residue at position 112 (S112) is a Phosphoserine. 2 consecutive RRM domains span residues 129–207 (CRVY…RPSN) and 226–304 (NRIY…KAVT). A Phosphoserine modification is found at S244. K251 carries the N6-acetyllysine modification. Phosphothreonine is present on T314. The tract at residues 416 to 437 (KKEKEEEELFPESERPEMLSEQ) is disordered. K419 participates in a covalent cross-link: Glycyl lysine isopeptide (Lys-Gly) (interchain with G-Cter in SUMO2). Over residues 427 to 437 (ESERPEMLSEQ) the composition is skewed to basic and acidic residues. K454 is subject to N6-acetyllysine. Residue K458 forms a Glycyl lysine isopeptide (Lys-Gly) (interchain with G-Cter in SUMO2) linkage. An RRM 3; atypical domain is found at 462 to 549 (TVMVLRNMVD…RKVVAEVYDQ (88 aa)).

This sequence belongs to the RRM half pint family. As to quaternary structure, homodimer. Associates with the spliceosome. Found in a complex with RO60 and Y5 RNA. Found in a complex with FUBP1 and far upstream element (FUSE) DNA segment. Interacts directly with ERCC3. Interacts with CDK7 and GTF2H1. Interacts with SRSF11/P54. Does not interact with ERCC3 in xeroderma pigmentosum complementation group B (XPB) cells. Interacts with ARGLU1; interaction may be involved in ARGLU1-mediated modulation of alternative splicing. In terms of tissue distribution, isoform 2 is expressed in colonic epithelium and colorectal epithelium cancer (at protein level). Isoform 6 is expressed in colorectal epithelial cancer but below detection level in colonic epithelium. Expressed in heart, brain, placenta, lung, liver, skeletal muscle, kidney, pancreas, spleen, thymus, prostate, testis, ovary, small intestine, colon and peripheral blood leukocytes.

It is found in the nucleus. DNA- and RNA-binding protein, involved in several nuclear processes such as pre-mRNA splicing, apoptosis and transcription regulation. In association with FUBP1 regulates MYC transcription at the P2 promoter through the core-TFIIH basal transcription factor. Acts as a transcriptional repressor through the core-TFIIH basal transcription factor. Represses FUBP1-induced transcriptional activation but not basal transcription. Decreases ERCC3 helicase activity. Does not repress TFIIH-mediated transcription in xeroderma pigmentosum complementation group B (XPB) cells. Is also involved in pre-mRNA splicing. Promotes splicing of an intron with weak 3'-splice site and pyrimidine tract in a cooperative manner with U2AF2. Involved in apoptosis induction when overexpressed in HeLa cells. Isoform 6 failed to repress MYC transcription and inhibited FIR-induced apoptosis in colorectal cancer. Isoform 6 may contribute to tumor progression by enabling increased MYC expression and greater resistance to apoptosis in tumors than in normal cells. Modulates alternative splicing of several mRNAs. Binds to relaxed DNA of active promoter regions. Binds to the pyrimidine tract and 3'-splice site regions of pre-mRNA; binding is enhanced in presence of U2AF2. Binds to Y5 RNA in association with RO60. Binds to poly(U) RNA. In Homo sapiens (Human), this protein is Poly(U)-binding-splicing factor PUF60.